The primary structure comprises 159 residues: Ribosomal RNA large subunit methyltransferase H (159 aa).

S-adenosyl-L-methionine contacts are provided by residues leucine 76, glycine 107, and leucine 126–leucine 131.

The protein belongs to the RNA methyltransferase RlmH family. Homodimer.

The protein localises to the cytoplasm. The enzyme catalyses pseudouridine(1915) in 23S rRNA + S-adenosyl-L-methionine = N(3)-methylpseudouridine(1915) in 23S rRNA + S-adenosyl-L-homocysteine + H(+). Specifically methylates the pseudouridine at position 1915 (m3Psi1915) in 23S rRNA. This Cupriavidus necator (strain ATCC 17699 / DSM 428 / KCTC 22496 / NCIMB 10442 / H16 / Stanier 337) (Ralstonia eutropha) protein is Ribosomal RNA large subunit methyltransferase H.